The chain runs to 470 residues: Argininosuccinate lyase (470 aa).

This sequence belongs to the lyase 1 family. Argininosuccinate lyase subfamily.

It is found in the cytoplasm. The catalysed reaction is 2-(N(omega)-L-arginino)succinate = fumarate + L-arginine. It participates in amino-acid biosynthesis; L-arginine biosynthesis; L-arginine from L-ornithine and carbamoyl phosphate: step 3/3. This is Argininosuccinate lyase from Mycolicibacterium vanbaalenii (strain DSM 7251 / JCM 13017 / BCRC 16820 / KCTC 9966 / NRRL B-24157 / PYR-1) (Mycobacterium vanbaalenii).